Consider the following 294-residue polypeptide: 4-hydroxy-tetrahydrodipicolinate synthase (294 aa).

Pyruvate is bound at residue threonine 45. The active-site Proton donor/acceptor is tyrosine 133. Residue lysine 162 is the Schiff-base intermediate with substrate of the active site. Isoleucine 204 serves as a coordination point for pyruvate.

The protein belongs to the DapA family. As to quaternary structure, homotetramer; dimer of dimers.

The protein resides in the cytoplasm. It catalyses the reaction L-aspartate 4-semialdehyde + pyruvate = (2S,4S)-4-hydroxy-2,3,4,5-tetrahydrodipicolinate + H2O + H(+). It participates in amino-acid biosynthesis; L-lysine biosynthesis via DAP pathway; (S)-tetrahydrodipicolinate from L-aspartate: step 3/4. Catalyzes the condensation of (S)-aspartate-beta-semialdehyde [(S)-ASA] and pyruvate to 4-hydroxy-tetrahydrodipicolinate (HTPA). This Rhizobium meliloti (strain 1021) (Ensifer meliloti) protein is 4-hydroxy-tetrahydrodipicolinate synthase.